The chain runs to 678 residues: Protein MALE DISCOVERER 2 (678 aa).

The N-terminal stretch at 1–25 is a signal peptide; that stretch reads MMGCGFHFPWFFFLIIGLQAPLSLS. Residues 26–323 lie on the Extracellular side of the membrane; that stretch reads LTSQGSALLK…SKGSKHVWLY (298 aa). An N-linked (GlcNAc...) asparagine glycan is attached at Asn-52. 4 LRR repeats span residues 71 to 94, 95 to 117, 119 to 141, and 143 to 164; these read KVQI…SQLS, DLRS…YGSF, NLEV…LSNG, and SLKH…KIVR. A disordered region spans residues 247 to 314; the sequence is LAAEPAPSAP…KNQPQDNKQS (68 aa). The span at 296–311 shows a compositional bias: polar residues; the sequence is KGSTSPDISKNQPQDN. Residues 324–344 form a helical membrane-spanning segment; sequence VVIAVASFVGLLIIVAVIFFC. Topologically, residues 345 to 678 are cytoplasmic; the sequence is RKRAVKSIGP…ELEILSSEAT (334 aa). Residues 346–651 enclose the Protein kinase domain; it reads KRAVKSIGPW…DVAEQLKQVI (306 aa).

It belongs to the protein kinase superfamily. Ser/Thr protein kinase family. Expressed in pollen tubes and seedlings.

It localises to the endomembrane system. The enzyme catalyses L-seryl-[protein] + ATP = O-phospho-L-seryl-[protein] + ADP + H(+). It catalyses the reaction L-threonyl-[protein] + ATP = O-phospho-L-threonyl-[protein] + ADP + H(+). In terms of biological role, involved in the pollen tube perception of the female signal by binding an unidentified female attractant. May be involved in the regulation of root hairs development. This chain is Protein MALE DISCOVERER 2 (MDIS2), found in Arabidopsis thaliana (Mouse-ear cress).